Reading from the N-terminus, the 98-residue chain is NADH-ubiquinone oxidoreductase chain 4L (98 aa).

The next 3 membrane-spanning stretches (helical) occupy residues 1–21 (MPIIYMNIMLSFIISLLGMLI), 29–49 (SLLCLEGMMLSLFIMSTLMAL), and 58–78 (IVPVALLVFAACEAAVGLALL).

It belongs to the complex I subunit 4L family. In terms of assembly, core subunit of respiratory chain NADH dehydrogenase (Complex I) which is composed of 45 different subunits.

It localises to the mitochondrion inner membrane. The enzyme catalyses a ubiquinone + NADH + 5 H(+)(in) = a ubiquinol + NAD(+) + 4 H(+)(out). Functionally, core subunit of the mitochondrial membrane respiratory chain NADH dehydrogenase (Complex I) which catalyzes electron transfer from NADH through the respiratory chain, using ubiquinone as an electron acceptor. Part of the enzyme membrane arm which is embedded in the lipid bilayer and involved in proton translocation. The sequence is that of NADH-ubiquinone oxidoreductase chain 4L (MT-ND4L) from Semnopithecus entellus (Northern plains gray langur).